The primary structure comprises 249 residues: 5-oxoprolinase subunit A (249 aa).

Belongs to the LamB/PxpA family. As to quaternary structure, forms a complex composed of PxpA, PxpB and PxpC.

It carries out the reaction 5-oxo-L-proline + ATP + 2 H2O = L-glutamate + ADP + phosphate + H(+). Catalyzes the cleavage of 5-oxoproline to form L-glutamate coupled to the hydrolysis of ATP to ADP and inorganic phosphate. This chain is 5-oxoprolinase subunit A, found in Limosilactobacillus fermentum (strain NBRC 3956 / LMG 18251) (Lactobacillus fermentum).